The primary structure comprises 72 residues: Translation initiation factor IF-1 (72 aa).

Residues 1 to 72 form the S1-like domain; sequence MAKDDVIEID…DKGRITYRYK (72 aa).

It belongs to the IF-1 family. Component of the 30S ribosomal translation pre-initiation complex which assembles on the 30S ribosome in the order IF-2 and IF-3, IF-1 and N-formylmethionyl-tRNA(fMet); mRNA recruitment can occur at any time during PIC assembly.

The protein resides in the cytoplasm. One of the essential components for the initiation of protein synthesis. Stabilizes the binding of IF-2 and IF-3 on the 30S subunit to which N-formylmethionyl-tRNA(fMet) subsequently binds. Helps modulate mRNA selection, yielding the 30S pre-initiation complex (PIC). Upon addition of the 50S ribosomal subunit IF-1, IF-2 and IF-3 are released leaving the mature 70S translation initiation complex. This chain is Translation initiation factor IF-1, found in Campylobacter fetus subsp. fetus (strain 82-40).